Reading from the N-terminus, the 365-residue chain is Serpentine receptor class epsilon-21 (365 aa).

Helical transmembrane passes span 49 to 69 (ILINFLFLLSIFVTFIGVFCI), 82 to 102 (IIISGMLLWLELVVSRSFVFI), 116 to 136 (LLFWAALLRYHYMFFGVHTLL), 158 to 178 (VWIAAILIGANFLISLTYAFL), 189 to 209 (IFIVCLAVAVVSIILLEIIYF), 250 to 270 (VVVVGAFIIMLILAECLPIIL), and 292 to 314 (PLVVVPTVVALMESFRKVFLSYY).

Belongs to the nematode receptor-like protein sre family.

It is found in the membrane. This is Serpentine receptor class epsilon-21 (sre-21) from Caenorhabditis elegans.